The chain runs to 162 residues: EF-hand calcium-binding domain-containing protein 11 (162 aa).

EF-hand domains lie at 18–53, 91–126, and 127–162; these read SERRKWVEVFKACDEDNKGYLSREDFKVAIVMLFGY, LYRNEIRHIFTAFDVHYRGFLTLEDFKRAFSQVAPK, and LPSRTVLEVFREADQDSDGHVSFRDFEYAMNHGKAK. 5 residues coordinate Ca(2+): Asp140, Asp142, Asp144, His146, and Asp151.

This Rattus norvegicus (Rat) protein is EF-hand calcium-binding domain-containing protein 11 (Efcab11).